The chain runs to 947 residues: MGFWENNKDSITSGLKSAGKYGYQGTKYVAKTGYKASKKHYNNSKARRERKSGKKNSSDEEYDSEDEMEYERKPTDIRSLKDPKSFPPPPLKPGQKTYTGQQQQQMPNGQASYAFQGAYQGQPGAGSTEQSQYAQPQYNQYPQQQLQQGVMPQQQQLQQGVVPQQPPIYGEQVPPYGSNSNATSYQSLPQQNQPQNAIPSQVSLNSASQQSTGFVSQNLQYGTQSSNPAPSPSFQNGLQCHQQPQYVSHGSTNLGQSQFPSGQQQQPTTQFGQQVLPSPAQPQQQQQGQPLPPPRGQVILPAPGEPLSNGFGQQQQQQQQQQQPLNQNNALLPQMNVEGVSGMAAVQPVYGQAMSSTTNMQDSNPSYGASPMQGQPPVGGQPPVPVRMQPQPPQPMQQGNIYPIEPSLDSTGSTPHFEVTPFDPDAPAPKPKIDIPTVDVSSLPPPPTHRDRGAVVHQEPAPSGKIQPNTTSSAASLPAKHSRTTTADNERNSGNKENDESTSKSSILGHYDVDVNIMPPPKPFRHGLDSVPSEHTTKNAPERAVPILPPRNNVEPPPPPSRGNFERTESVLSTNAANVQEDPISNFLPPPKPFRHTETKQNQNSKASPVEMKGEVLPGHPSEEDRNVEPSLVPQSKPQSQSQFRRAHMETQPIQNFQPPPKPFRRSQSSNSSDSSYTIDGPEANHGRGRGRIAKHHDGDEYNPKSENSTENGRLGDAPNSFIRKRAPTPPAPSRSEKLHEGTITSEVDSSKDANKYEKSIPPVTSSIQAQQSTKKAPPPVVKPKPRNFSLKANEYPKELTREATGQDEVLNSITNELSHIKLRKTNVNLEKLGGSKKVKDSSPVPSDLDEKYVSASGSITPPRPPPSRSSPKKVPPVVPKKNDNLKKKPPVVPKKKPLLKSLEPRPIEMERAYSGDISAADDNLNPFERYKRNVVPQEDDRLHKLK.

3 disordered regions span residues 1–334 (MGFW…LLPQ), 354–810 (MSST…QDEV), and 824–904 (RKTN…KSLE). Over residues 36–54 (ASKKHYNNSKARRERKSGK) the composition is skewed to basic residues. 3 positions are modified to phosphoserine: S57, S58, and S64. The segment covering 59 to 69 (DEEYDSEDEME) has biased composition (acidic residues). Positions 70-84 (YERKPTDIRSLKDPK) are enriched in basic and acidic residues. Low complexity-rich tracts occupy residues 93–105 (PGQK…QQQQ) and 130–163 (QSQY…GVVP). A compositionally biased stretch (polar residues) spans 177–255 (GSNSNATSYQ…YVSHGSTNLG (79 aa)). Composition is skewed to low complexity over residues 256–289 (QSQF…QQGQ) and 313–334 (QQQQ…LLPQ). The span at 354–367 (MSSTTNMQDSNPSY) shows a compositional bias: polar residues. Pro residues predominate over residues 379 to 395 (GGQPPVPVRMQPQPPQP). Positions 466–475 (IQPNTTSSAA) are enriched in polar residues. Position 476 is a phosphoserine (S476). The segment covering 488-502 (DNERNSGNKENDEST) has biased composition (basic and acidic residues). The span at 633 to 644 (VPQSKPQSQSQF) shows a compositional bias: polar residues. Residues 667-676 (SQSSNSSDSS) are compositionally biased toward low complexity. T729 carries the phosphothreonine modification. Residues 749–759 (DSSKDANKYEK) are compositionally biased toward basic and acidic residues. Positions 763–774 (PVTSSIQAQQST) are enriched in polar residues. At T861 the chain carries Phosphothreonine. Over residues 862–879 (PPRPPPSRSSPKKVPPVV) the composition is skewed to pro residues. Over residues 888–899 (KKPPVVPKKKPL) the composition is skewed to basic residues.

This sequence belongs to the AIM3 family. Interacts with RVS167.

Its subcellular location is the membrane raft. The sequence is that of Altered inheritance of mitochondria protein 3 (AIM3) from Saccharomyces cerevisiae (strain ATCC 204508 / S288c) (Baker's yeast).